The primary structure comprises 485 residues: Serine/threonine-protein kinase 4 (485 aa).

The Protein kinase domain maps to 30–281 (FDVLEKLGEG…ATELLQHPFI (252 aa)). ATP is bound by residues 36-44 (LGEGSYGSV) and lysine 59. Aspartate 149 serves as the catalytic Proton acceptor. The residue at position 183 (threonine 183) is a Phosphothreonine; by autocatalysis. The SARAH domain maps to 431 to 478 (YSFLKDWSVAEVQLKLNSLDPMMEREIEEIHHKYQAKRQPILEAIESK).

Belongs to the protein kinase superfamily. STE Ser/Thr protein kinase family. STE20 subfamily. As to quaternary structure, homodimer; mediated via the coiled-coil region. Mg(2+) is required as a cofactor. Post-translationally, autophosphorylated on Thr-183. In terms of processing, proteolytically cleaved by caspase-3 during apoptosis at Asp-326 resulting in a 37 kDa form. Proteolytic cleavage results in kinase activation and nuclear translocation of the truncated form (MST1/N).

It is found in the cytoplasm. Its subcellular location is the nucleus. It catalyses the reaction L-seryl-[protein] + ATP = O-phospho-L-seryl-[protein] + ADP + H(+). It carries out the reaction L-threonyl-[protein] + ATP = O-phospho-L-threonyl-[protein] + ADP + H(+). Its activity is regulated as follows. The C-terminal non-catalytic region inhibits the kinase activity, the enzyme is activated by caspase-cleavage. Homodimerization and autophosphorylation of Thr-183 is also required for full activation. Its function is as follows. Stress-activated, pro-apoptotic kinase which, following caspase-cleavage, enters the nucleus and induces chromatin condensation followed by internucleosomal DNA fragmentation. Key component of the Hippo signaling pathway which plays a pivotal role in organ size control and tumor suppression by restricting proliferation and promoting apoptosis. The core of this pathway is composed of a kinase cascade wherein stk3/mst2 and stk4/mst1, in complex with its regulatory protein sav1, phosphorylates and activates lats1/2 in complex with its regulatory protein mob1, which in turn phosphorylates and inactivates yap1 oncoprotein and wwtr1/taz. Phosphorylation of yap1 by lats2 inhibits its translocation into the nucleus to regulate cellular genes important for cell proliferation, cell death, and cell migration. Phosphorylates 'Ser-14' of histone H2B (H2BS14ph) during apoptosis. The protein is Serine/threonine-protein kinase 4 (stk4) of Xenopus laevis (African clawed frog).